Here is an 809-residue protein sequence, read N- to C-terminus: Phospholipase D alpha 1 (809 aa).

Positions 1–125 (MAQILLHGTL…LDGHEIDKWV (125 aa)) constitute a C2 domain. Asp-186 contacts Ca(2+). Positions 326-365 (TMFTHHQKIVVVDSALPGGGGSDKRRIVSFVGGLDLCDGR) constitute a PLD phosphodiesterase 1 domain. Catalysis depends on residues His-331, Lys-333, and Asp-338. His-331 is a binding site for a 1,2-diacyl-sn-glycero-3-phosphate. 2 residues coordinate Ca(2+): His-371 and His-405. A 1,2-diacyl-sn-glycero-3-phosphate-binding residues include Gln-521 and His-660. A PLD phosphodiesterase 2 domain is found at 655-682 (FMIYVHTKMMIVDDEYIIIGSANINQRS). Catalysis depends on residues His-660, Lys-662, and Asp-667. Glu-721 provides a ligand contact to Ca(2+).

This sequence belongs to the phospholipase D family. C2-PLD subfamily. Ca(2+) serves as cofactor.

It carries out the reaction a 1,2-diacyl-sn-glycero-3-phosphocholine + H2O = a 1,2-diacyl-sn-glycero-3-phosphate + choline + H(+). Hydrolyzes glycerol-phospholipids at the terminal phosphodiesteric bond. Plays an important role in various cellular processes. The chain is Phospholipase D alpha 1 (PLD1) from Vigna unguiculata (Cowpea).